The chain runs to 188 residues: Peptidyl-prolyl cis-trans isomerase (188 aa).

The N-terminal stretch at 1–20 is a signal peptide; sequence MLKRVAIVLGGLLISAHALA. Residues 21–181 form the PPIase cyclophilin-type domain; that stretch reads NTMVEMKTNL…QPVKIISVQI (161 aa).

Belongs to the cyclophilin-type PPIase family.

It localises to the periplasm. It catalyses the reaction [protein]-peptidylproline (omega=180) = [protein]-peptidylproline (omega=0). PPIases accelerate the folding of proteins. It catalyzes the cis-trans isomerization of proline imidic peptide bonds in oligopeptides. This protein is not essential for growth. Presumably plays a role in signal transduction. The protein is Peptidyl-prolyl cis-trans isomerase (rotA) of Acinetobacter baylyi (strain ATCC 33305 / BD413 / ADP1).